Here is a 168-residue protein sequence, read N- to C-terminus: Pleiotrophin (168 aa).

The N-terminal stretch at Met1–Ala32 is a signal peptide. Intrachain disulfides connect Cys47/Cys76, Cys55/Cys85, Cys62/Cys89, Cys99/Cys131, and Cys109/Cys141. Chondroitin sulfate binding stretches follow at residues Lys92 to Cys99 and Lys123 to Cys131. Positions Lys139–Asp168 are disordered. The segment at Pro147–Asp168 is chondroitin sulfate A binding.

Belongs to the pleiotrophin family. Interacts with ALK and NEK6. Interacts with PTPRZ1 (via chondroitin sulfate groups); promotes formation of homooligomers; oligomerization impairs tyrosine phosphatase activity. Forms a complex with PTPRZ1 and CTNNB1; this complex inactivates PTPRZ1 protein tyrosine phosphatase activity through PTN interaction and stimulates tyrosine phosphorylation of CTNNB1. Interacts with ITGB3 and ITGA5. Forms a complex with PTPRZ1 and integrin alpha-V/beta-3 (ITGAV:ITGB3) that stimulates endothelial cell migration through ITGB3 'Tyr-773' phosphorylation. Interacts with SDC3 (via heparan sulfate chains); this interaction mediates the neurite outgrowth-promoting signal from PTN to the cytoskeleton of growing neurites; this interaction mediates osteoblast recruitment. Interacts with GPC2 (via heparan sulfate); this interaction promotes neurite outgrowth through binding of PTN with chondroitin sulfate of proteoglycans, thereby releasing PTPRS of chondroitin sulfate proteoglycans (CSPGs) and leading to binding with heparan sulfate of GPC2. Phosphorylated by NEK6. As to expression, osteoblast and brain. Expressed in the follicular epithelium and granulosa cells of the ovary. Strongly expressed in the uterus of newborn mice, and the degree of expression decreased in one-week-old mice, although the expression continues even in the uteri of adult mice. Expression gradually increases from proestrus to estrus, then decreases sharply, and thereafter gradually increased again. strongly expressed in the cochlea of WT mice 1 week after birth, and then the expression decreased and was undetectable by week 8 after birth. Expressed around the cell soma of osteocytes and apparently captured in the unmineralized interstitial matrix surrounding the cells. Furthermore distributed throughout the intraosseous canalicular porosity, being localized in the unmineralized matrix around the cell processes. Strongly expressed in the innermost layer of the periosteum.

The protein resides in the secreted. Secreted growth factor that mediates its signal through cell-surface proteoglycan and non-proteoglycan receptors. Binds cell-surface proteoglycan receptor via their chondroitin sulfate (CS) groups. Thereby regulates many processes like cell proliferation, cell survival, cell growth, cell differentiation and cell migration in several tissues namely neuron and bone. Also plays a role in synaptic plasticity and learning-related behavior by inhibiting long-term synaptic potentiation. Binds PTPRZ1, leading to neutralization of the negative charges of the CS chains of PTPRZ1, inducing PTPRZ1 clustering, thereby causing the dimerization and inactivation of its phosphatase activity leading to increased tyrosine phosphorylation of each of the PTPRZ1 substrates like ALK or AFAP1L2 in order to activate the PI3K-AKT pathway. Through PTPRZ1 binding controls oligodendrocyte precursor cell differentiation by enhancing the phosphorylation of AFAP1L2 in order to activate the PI3K-AKT pathway. Forms a complex with PTPRZ1 and integrin alpha-V/beta-3 (ITGAV:ITGB3) that stimulates endothelial cell migration through SRC dephosphorylation and activation that consequently leads to ITGB3 'Tyr-773' phosphorylation. In adult hippocampus promotes dendritic arborization, spine development, and functional integration and connectivity of newborn granule neurons through ALK by activating AKT signaling pathway. Binds GPC2 and chondroitin sulfate proteoglycans (CSPGs) at the neuron surface, leading to abrogation of binding between PTPRS and CSPGs and neurite outgrowth promotion. Binds SDC3 and mediates bone formation by recruiting and attaching osteoblasts/osteoblast precursors to the sites for new bone deposition. Binds ALK and promotes cell survival and cell proliferation through MAPK pathway activation. Inhibits proliferation and enhances differentiation of neural stem cells by inhibiting FGF2-induced fibroblast growth factor receptor signaling pathway. Mediates regulatory mechanisms in normal hemostasis and in hematopoietic regeneration and in maintaining the balance of myeloid and lymphoid regeneration. In addition may play a role in the female reproductive system, auditory response and the progesterone-induced decidualization pathway. This chain is Pleiotrophin, found in Mus musculus (Mouse).